We begin with the raw amino-acid sequence, 402 residues long: Mediator of RNA polymerase II transcription subunit 27 (402 aa).

Polar residues predominate over residues 1-23; that stretch reads MQTLHQSQLLQNPAEAANNQSES. The interval 1–30 is disordered; it reads MQTLHQSQLLQNPAEAANNQSESDAPPKQV. Residues 28-49 adopt a coiled-coil conformation; it reads KQVAQAMERLNQAARVIADIRL.

This sequence belongs to the Mediator complex subunit 27 family. As to quaternary structure, component of the Mediator complex.

It localises to the nucleus. Its function is as follows. Component of the Mediator complex, a coactivator involved in the regulated transcription of nearly all RNA polymerase II-dependent genes. Mediator functions as a bridge to convey information from gene-specific regulatory proteins to the basal RNA polymerase II transcription machinery. The Mediator complex, having a compact conformation in its free form, is recruited to promoters by direct interactions with regulatory proteins and serves for the assembly of a functional preinitiation complex with RNA polymerase II and the general transcription factors. This is Mediator of RNA polymerase II transcription subunit 27 (MED27) from Arabidopsis thaliana (Mouse-ear cress).